A 144-amino-acid polypeptide reads, in one-letter code: D-aminoacyl-tRNA deacylase (144 aa).

Residues 136 to 137 carry the Gly-cisPro motif, important for rejection of L-amino acids motif; sequence GP.

This sequence belongs to the DTD family. In terms of assembly, homodimer.

It localises to the cytoplasm. The catalysed reaction is glycyl-tRNA(Ala) + H2O = tRNA(Ala) + glycine + H(+). It catalyses the reaction a D-aminoacyl-tRNA + H2O = a tRNA + a D-alpha-amino acid + H(+). Functionally, an aminoacyl-tRNA editing enzyme that deacylates mischarged D-aminoacyl-tRNAs. Also deacylates mischarged glycyl-tRNA(Ala), protecting cells against glycine mischarging by AlaRS. Acts via tRNA-based rather than protein-based catalysis; rejects L-amino acids rather than detecting D-amino acids in the active site. By recycling D-aminoacyl-tRNA to D-amino acids and free tRNA molecules, this enzyme counteracts the toxicity associated with the formation of D-aminoacyl-tRNA entities in vivo and helps enforce protein L-homochirality. This is D-aminoacyl-tRNA deacylase from Haemophilus influenzae (strain PittEE).